The chain runs to 451 residues: 3-carboxy-cis,cis-muconate cycloisomerase (451 aa).

The protein belongs to the class-II fumarase/aspartase family. In terms of assembly, homotetramer.

The enzyme catalyses 2-(carboxymethyl)-5-oxo-2,5-dihydro-2-furoate = 3-carboxy-cis,cis-muconate + H(+). The protein operates within aromatic compound metabolism; beta-ketoadipate pathway; 5-oxo-4,5-dihydro-2-furylacetate from 3-carboxy-cis,cis-muconate: step 1/2. In terms of biological role, catalyzes an anti cycloisomerization. This Acinetobacter baylyi (strain ATCC 33305 / BD413 / ADP1) protein is 3-carboxy-cis,cis-muconate cycloisomerase (pcaB).